Reading from the N-terminus, the 276-residue chain is Rhomboid protease GlpG (276 aa).

6 helical membrane-spanning segments follow: residues 94–114 (GPVT…MQIL), 142–162 (ALMH…WYLG), 169–189 (LGSG…GYVQ), 192–212 (FSGP…GYVW), 229–249 (LIIF…GMSM), and 250–270 (ANGA…VDSL). Ser-201 acts as the Nucleophile in catalysis. The active site involves His-254.

It belongs to the peptidase S54 family.

It is found in the cell inner membrane. The enzyme catalyses Cleaves type-1 transmembrane domains using a catalytic dyad composed of serine and histidine that are contributed by different transmembrane domains.. Functionally, rhomboid-type serine protease that catalyzes intramembrane proteolysis. The chain is Rhomboid protease GlpG from Escherichia coli O81 (strain ED1a).